A 156-amino-acid chain; its full sequence is Endoribonuclease YbeY (156 aa).

Zn(2+)-binding residues include His122, His126, and His132.

Belongs to the endoribonuclease YbeY family. Requires Zn(2+) as cofactor.

It is found in the cytoplasm. Single strand-specific metallo-endoribonuclease involved in late-stage 70S ribosome quality control and in maturation of the 3' terminus of the 16S rRNA. The chain is Endoribonuclease YbeY from Bacillus cereus (strain ATCC 14579 / DSM 31 / CCUG 7414 / JCM 2152 / NBRC 15305 / NCIMB 9373 / NCTC 2599 / NRRL B-3711).